A 906-amino-acid chain; its full sequence is MGLRGLLCVCLVSLLALQAVAAQGSPTRNPKGGKKRMAVDAAVDGVVIRSLKVNCKVTSRFAHYIITSQVVNSADTAKEVSFNVEIPKTAFISDFAITADENAFTGDIKDKVTAWKQYRKAAISGENAGLVRASGRTMEQFSIHIIVGPRSKATFRLTYEEVLRRKLMQYDIVIKVKPQQLVQHFEIDVDIFEPQGIRKLDVEASFLPKELAAQLIKKSFSGKKGHVLFRPTVSQQQTCPTCSTTLLNGDFKVTYDVNRDDACDLLVANNYFAHFFAPQNLKKLNKNVVFVIDISSSMEGQKLKQTKEALHKILGDMRPGDYFDLVLFGSAVQSWKGSLVQASPANLEAARNFVQQFSLAGATNLNGGLLRGIEILNKAQQSLPELSNHASILIMLTDGEPTEGVMDRTQILKNVRDGIKGRFPLYNLGFGHDVDLNFLEVMSLENNGRVQRIYEDHDATQQLQGFYEQVANPLLRDVELLYPREAVSDLTQHRHKQYYEGSEIMVAGRIADHKLSSFKADVRAHGEGQEFMTTCLVDKEEMKKLLRERGHMLENHVERLWAYLTIQELLAKRMKLEGQEKANVSAKALQMSLAYQFVTPLTSMTVRGMTDQDGLEPIIDKPLDDYLPLEMVGPRKTFMLQASQPAPTHSSLDIKKLPDQVTGVDTDPHFLIHVPQKEDTLCFNINEEPGVVLSLVQDPDTGFSVNGQLIGNEAGSPGKHEGTYFGRLGIANPATDFQLEVTPQNITLNPGSGGPVFSWRDQAFLRQNEVLVTINRKRNLVVSVEDGGTFEVVLHRVWRGSAVRQDFLGFYVLDSHRMSARTHGLLGQFFHPFDYKVSNLHPGSDPTKTDATMVVKNRRLTVTRGLQKDYRKDPRHGAEVTCWFIHNNGDGLIDGIHTDYIVPDIF.

The signal sequence occupies residues 1 to 22 (MGLRGLLCVCLVSLLALQAVAA). A propeptide spanning residues 23–29 (QGSPTRN) is cleaved from the precursor. Residues 32–161 (GGKKRMAVDA…KATFRLTYEE (130 aa)) enclose the VIT domain. Cys-55 carries an S-linked (Hex...) cysteine glycan. The residue at position 124 (Ser-124) is a Phosphoserine. Positions 287–470 (NVVFVIDISS…QQLQGFYEQV (184 aa)) constitute a VWFA domain. A phosphothreonine mark is found at Thr-397 and Thr-402. Asn-583 carries an N-linked (GlcNAc...) asparagine glycan. Ser-643 carries O-linked (GalNAc...) serine glycosylation. An O-linked (GalNAc...) threonine glycan is attached at Thr-648. Position 667 is an aspartate 1-(chondroitin 4-sulfate)-ester (Asp-667). A propeptide spanning residues 668–906 (PHFLIHVPQK…HTDYIVPDIF (239 aa)) is cleaved from the precursor. Asn-745 carries an N-linked (GlcNAc...) asparagine glycan.

The protein belongs to the ITIH family. I-alpha-I plasma protease inhibitors are assembled from one or two heavy chains (HC) and one light chain, bikunin. Inter-alpha-inhibitor (I-alpha-I) is composed of ITIH1/HC1, ITIH2/HC2 and bikunin. Interacts with TNFAIP6 (via Link and CUB domains). Heavy chains are linked to bikunin via chondroitin 4-sulfate esterified to the alpha-carboxyl of the C-terminal aspartate after propeptide cleavage. In terms of processing, the S-linked glycan is composed of two 6-carbon sugars, possibly Glc or Gal.

The protein localises to the secreted. Functionally, may act as a carrier of hyaluronan in serum or as a binding protein between hyaluronan and other matrix protein, including those on cell surfaces in tissues to regulate the localization, synthesis and degradation of hyaluronan which are essential to cells undergoing biological processes. This is Inter-alpha-trypsin inhibitor heavy chain H1 (ITIH1) from Bos taurus (Bovine).